An 89-amino-acid chain; its full sequence is Small ribosomal subunit protein uS15c (89 aa).

Belongs to the universal ribosomal protein uS15 family. Part of the 30S ribosomal subunit.

Its subcellular location is the plastid. It is found in the chloroplast. The protein is Small ribosomal subunit protein uS15c (rps15) of Chloranthus spicatus (Chulantree).